Consider the following 304-residue polypeptide: Ribosomal RNA small subunit methyltransferase H (304 aa).

Residues 47–49 (GGH), Asp-66, Phe-93, Asp-108, and Gln-115 contribute to the S-adenosyl-L-methionine site.

The protein belongs to the methyltransferase superfamily. RsmH family.

It is found in the cytoplasm. The catalysed reaction is cytidine(1402) in 16S rRNA + S-adenosyl-L-methionine = N(4)-methylcytidine(1402) in 16S rRNA + S-adenosyl-L-homocysteine + H(+). Its function is as follows. Specifically methylates the N4 position of cytidine in position 1402 (C1402) of 16S rRNA. The polypeptide is Ribosomal RNA small subunit methyltransferase H (Prochlorococcus marinus (strain NATL2A)).